The sequence spans 486 residues: L-arabinose isomerase (486 aa).

Mn(2+)-binding residues include glutamate 299, glutamate 324, histidine 341, and histidine 440.

The protein belongs to the arabinose isomerase family. It depends on Mn(2+) as a cofactor.

It catalyses the reaction beta-L-arabinopyranose = L-ribulose. Its pathway is carbohydrate degradation; L-arabinose degradation via L-ribulose; D-xylulose 5-phosphate from L-arabinose (bacterial route): step 1/3. Its function is as follows. Catalyzes the conversion of L-arabinose to L-ribulose. The chain is L-arabinose isomerase from Shouchella clausii (strain KSM-K16) (Alkalihalobacillus clausii).